The primary structure comprises 207 residues: 5-amino-6-(5-phosphoribosylamino)uracil reductase (207 aa).

Serine 6 is a binding site for substrate. Tryptophan 8 is a binding site for NADP(+). Arginine 22 contacts substrate. NADP(+) is bound at residue aspartate 38. Residues leucine 42 and arginine 45 each contribute to the substrate site. Serine 72 serves as a coordination point for NADP(+). Glutamate 137 serves as a coordination point for substrate.

The protein belongs to the HTP reductase family.

It catalyses the reaction 5-amino-6-(5-phospho-D-ribitylamino)uracil + NADP(+) = 5-amino-6-(5-phospho-D-ribosylamino)uracil + NADPH + H(+). The protein operates within cofactor biosynthesis; riboflavin biosynthesis; 5-amino-6-(D-ribitylamino)uracil from GTP: step 3/4. This Buchnera aphidicola subsp. Acyrthosiphon pisum (strain APS) (Acyrthosiphon pisum symbiotic bacterium) protein is 5-amino-6-(5-phosphoribosylamino)uracil reductase (ribD2).